The chain runs to 595 residues: Protein halfway (595 aa).

2 disordered regions span residues 1–42 (MLLT…ADDE) and 64–98 (TGAA…PLLP). 2 N-linked (GlcNAc...) asparagine glycosylation sites follow: asparagine 250 and asparagine 255. Residues 347-402 (ESTKRCMTKCPVIPNYGSCKCRFESIMIIQDDQSKPKCHVDCSNLGLVELPPRLPD) enclose the LRRNT domain. LRR repeat units follow at residues 403–424 (NTFV…FQTN), 429–450 (NINR…EGTK), and 454–475 (NFQR…FLNN). Residues 489-538 (NKLQCDCNSAKTLQNWLKERSTDIPDYMEIRCRNIPQSVIELQEAKLCQS) form the LRRCT domain.

Functionally, has a role in the ecdysone induced cascade; probably indirect control of 'late' ecdysone genes. This Drosophila pseudoobscura pseudoobscura (Fruit fly) protein is Protein halfway (hfw).